Here is a 202-residue protein sequence, read N- to C-terminus: ATP-dependent Clp protease proteolytic subunit (202 aa).

Ser106 (nucleophile) is an active-site residue. Residue His131 is part of the active site.

It belongs to the peptidase S14 family. Fourteen ClpP subunits assemble into 2 heptameric rings which stack back to back to give a disk-like structure with a central cavity, resembling the structure of eukaryotic proteasomes.

The protein resides in the cytoplasm. It catalyses the reaction Hydrolysis of proteins to small peptides in the presence of ATP and magnesium. alpha-casein is the usual test substrate. In the absence of ATP, only oligopeptides shorter than five residues are hydrolyzed (such as succinyl-Leu-Tyr-|-NHMec, and Leu-Tyr-Leu-|-Tyr-Trp, in which cleavage of the -Tyr-|-Leu- and -Tyr-|-Trp bonds also occurs).. Functionally, cleaves peptides in various proteins in a process that requires ATP hydrolysis. Has a chymotrypsin-like activity. Plays a major role in the degradation of misfolded proteins. The chain is ATP-dependent Clp protease proteolytic subunit from Shewanella oneidensis (strain ATCC 700550 / JCM 31522 / CIP 106686 / LMG 19005 / NCIMB 14063 / MR-1).